The primary structure comprises 319 residues: MRVLIVKTSSMGDVLHTLPALTDAQQAIPGIKFDWVVEEGFAQIPSWHAAVERVIPVAIRRWRKAWFSAPIKAERKAFREALQAENYDAVIDAQGLVKSAALVTRLAHGVKHGMDWQTAREPLASLFYNRKHHIAKQQHAVERTRELFAKSLGYSKPQTQGDYAIAQHFLTNLPTDAGEYAVFLHATTRDDKHWPEEHWRELIGLLADSGIRIKLPWGAPHEEERAKRLAEGFAYVEVLPKMSLEGVARVLAGAKFVVSVDTGLSHLTAALDRPNITVYGPTDPGLIGGYGKNQMVCRAPRENLINLNSQAVLEKLSSL.

The ADP-L-glycero-beta-D-manno-heptose site is built by threonine 187, threonine 188, lysine 192, glutamate 222, methionine 242, aspartate 261, threonine 262, glycine 263, and histidine 266.

This sequence belongs to the glycosyltransferase 9 family.

The protein localises to the cell inner membrane. The catalysed reaction is an alpha-Kdo-(2-&gt;4)-alpha-Kdo-(2-&gt;6)-lipid A + ADP-L-glycero-beta-D-manno-heptose = an L-alpha-D-Hep-(1-&gt;5)-[alpha-Kdo-(2-&gt;4)]-alpha-Kdo-(2-&gt;6)-lipid A + ADP + H(+). It carries out the reaction alpha-Kdo-(2-&gt;4)-alpha-Kdo-(2-&gt;6)-lipid A (E. coli) + ADP-L-glycero-beta-D-manno-heptose = L-alpha-D-Hep-(1-&gt;5)-[alpha-Kdo-(2-&gt;4)]-alpha-Kdo-(2-&gt;6)-lipid A (E. coli) + ADP + H(+). It participates in bacterial outer membrane biogenesis; LPS core biosynthesis. Its function is as follows. Glycosyltransferase involved in the biosynthesis of the core oligosaccharide region of lipopolysaccharide (LPS). Catalyzes the addition of the first heptose unit to one 3-deoxy-D-manno-octulosonic acid (Kdo) residue of the Kdo2-lipid A module. The analog ADP-mannose can serve as an alternative donor in place of ADP-L-glycero-D-manno-heptose for the glycosylation of Kdo2-lipid A. Displays no activity with ADP-glucose, GDP-mannose, UDP-glucose or UDP-galactose. The protein is Lipopolysaccharide heptosyltransferase 1 of Escherichia coli (strain K12).